Reading from the N-terminus, the 2280-residue chain is MVSKPFKPIVLNATFEWQVFKRCYLRVAPREAFCENLSELHHYFARRVNAWLKHATRTLPDEYTFVEEGLLDMFGTKAPDSVQEGTLFRELFGVDQTEQFPLSLADLARLQGELVDATRTPGHALRQKYTMTTIQDLINKITKVVPVQATLNEMHARRQFERERADLFHELPLVDEDAVAQPKTYFYTMWRQVVKKGKAYFCPLVKTSAWRTKISAITEPIKDFLIAFWQAVQQEMGVNPQYLQLAWLQKLKPTTLTIILQQHKHTVSGWLATMTALVEVYSNLFDDLRKSSVTIVSSIGAFFDICKDFVSQVVELVKTTFTAQGPTDLGWAAVLAGAAMILLKMSGCPGVIGMWTKVLKICGGITTITAAARGVRWLKDLYEEAEGRRLPKMYMARGAALIELAASREVTGVDELKGLLDCFTILIEEGTELIHKFGTSPLAGLVRTYVSELETQANNIRSTIKLDTPRRVPVVIILTGAPGIGKTRLAQYIGQRFGKTSNFSVAVDHHDGYTGNTVCIWDEFDVDSKGAFVETMIGIANTAPFPLNCDRVENKGRVFTSDYVICTSNYPTSVIPDNPRAAAFYRRVLTVDVSAPDLEEWKKRNPGKRPTPDLYQDDFSHLKLMLRPYLGYNPDGDTLEGPRVAPTQISIAGLITLMERRFKEQAGPLQNLWLQVPKTLVEQSTNMVKAFMYANRAVCDVIPNPATRDITETALSKVFVCGTAPPPEFVGKHIVITGIEVGDASIANSLLSMFTTTTRLSAAAQREYMYRVWSPLIHIQDRSMNTQNLPYINRVIPVTSHWDFLRGLRHHLGFTSIPGMWKAFQGWRTSQGIVDFVAHHMADVTFPSNPECTIFRTPDADVVFYTFGSYVCFATPARVPYVGTPPTTIHSNTPRCMTWGETLALLCEVVAEFVLHFGPVILSAANIAYLMTRGSRTEEAKGKTKHGRGMRHGHRAGVSLSDDEYDEWRDLMRDWRRDMSVNDFLMLRERSALGMDDEDVARYRAWLEIRAMRMAGGAYTHATIIGRGGVRDEIIRTSPRRAPTRPQQHYEEEGPTAIVEFTQGGDHIGYGVHIGNGNVITVTHVASTSDEVNGSAFKITRTVGETTWVQGPFSQLPHMQIGSGSPVYFTTRLHPVFTISEGTFETPNITVNGFHVRIMNGYPTKKGDCGLPYFNSNRQLVALHAGTDTQGETKVAQRVVKEVTTQDEFQWKGLPVVKSGLDVGGMPTGTRYHRSPAWPEEQPGETHAPAPFGSGDKRYTFSQTEMLVNGLKPYTEPTAGVPPQLLSRAVTHVRSYIETIIGTHRSPVLTYHQACELLERTTSCGPFVQGLKGDYWDEEQQQYTGVLANHLEQAWDKANKGIAPRNAYKLALKDELRPIEKNKAGKRRLLWGCDAATTLIATAAFKAVATRLQVVTPMTPVAVGINMDSVQMQVMNDSLKGGVLYCLDYSKWDSTQNPAVTAASLAILERFAEPHPIVSCAIEALSSPAEGYVNDIKFVTRGGLPSGMPFTSVVNSINHMIYVAAAILQAYESHNVPYTGNVFQVETIHTYGDDCMYSVCPATASIFHTVLANLTSYGLKPTAADKSDAIKPTNTPVFLKRTFTQTPHGIRALLDITSITRQFYWLKANRTSDPSSPPAFDRQARSAQLENALAYASQHGPVMFDTVRQIAIKTAQGEGLVLVNTNYDQALATYNAWFIGGTVPDPVGHTEGTHKIVFEMEGNGSNPEPKQSNNPMVVDPPGTTGPTTSHVVVANPEQPNGAAQRLELAVATGAIQSNVPEAIRNCFAVFRTFAWNDRMPTGTFLGSISLHPNINPYTSHLSGMWAGWGGSFEVRLSISGSGVFAGRIIASVIPPGVDPSSIRDPGVLPHAFVDARITEPVSFMIPDVRAVDYHRMDGAEPTCSLGFWVYQPLLNPFSTTAVSTCWVSVETKPGGDFDFCLLRPPGQQMENGVSPEGLLPRRLGYSRGNRVGGLVVGMILVAEHKQVNRHFNSNSVTFGWSTAPVNPMAAEIVTNQAHSTSRHAWLSIGAQNKGPLFPGIPNHFPDSCASTVVGAMDTSLGGRPSTGVCGPAISFQNNGDVYENDTPSVMFATYDPLTSGTGVALTNSINPASLALVRISNNDFDTSGFANDKNVVVQMSWEMYTGTNQIRGQVTPMSGTNYTFTSTGANTLVLWQERMLSYDGHQAILYSSQLERTAEYFQNDIVNIPENSMAVFNVETNSASFQIGIRPDGYMVTGGSIGVNVPLEPETRFQYVGILPLSAALSGPSGNMGRARRVFQ.

The SF3 helicase domain occupies 454–608 (ETQANNIRST…EEWKKRNPGK (155 aa)). 480–487 (GAPGIGKT) provides a ligand contact to ATP. Tyr965 carries the post-translational modification O-(5'-phospho-RNA)-tyrosine. Residues 1054–1202 (GPTAIVEFTQ…TKVAQRVVKE (149 aa)) enclose the Peptidase C24 domain. Catalysis depends on for 3CLpro activity residues His1084, Glu1105, and Cys1169. Residues 1442–1567 (GVLYCLDYSK…SVCPATASIF (126 aa)) enclose the RdRp catalytic domain. The tract at residues 1722-1746 (GNGSNPEPKQSNNPMVVDPPGTTGP) is disordered. The span at 1723–1735 (NGSNPEPKQSNNP) shows a compositional bias: polar residues.

As to quaternary structure, homodimer. Homomultimer. Post-translationally, specific enzymatic cleavages in vivo yield mature proteins. Pro-Pol is first autocatalytically cleaved, then processes the whole polyprotein. In terms of processing, VPg is uridylylated by the polymerase and is covalently attached to the 5'-end of the polyadenylated genomic and subgenomic RNAs. This uridylylated form acts as a nucleotide-peptide primer for the polymerase.

It localises to the virion. The protein localises to the host cytoplasm. The catalysed reaction is a ribonucleoside 5'-triphosphate + H2O = a ribonucleoside 5'-diphosphate + phosphate + H(+). The enzyme catalyses RNA(n) + a ribonucleoside 5'-triphosphate = RNA(n+1) + diphosphate. It carries out the reaction Endopeptidase with a preference for cleavage when the P1 position is occupied by Glu-|-Xaa and the P1' position is occupied by Gly-|-Yaa.. In terms of biological role, together with NTPase and NS4, initiates the formation of the replication complex. Induces the proliferation of the host smooth ER membranes forming long tubular structures. These remodeled membranes probably form the viral factories that contain the replication complex. Displays NTPase activity, but no helicase activity. Induces the formation of convoluted membranes derived from the host ER. These remodeled membranes probably form the viral factories that contain the replication complex. Together with NS2 and NS4, initiates the formation of the replication complex. Its function is as follows. Probable key protein responsible for the formation of membrane alterations by the virus. Induces the formation of convoluted membranes derived from the host ER. These remodeled membranes probably form the viral factories that contain the replication complex. Together with NS2 and NTPase, initiates the formation of the replication complex. Functionally, viral genome-linked protein is covalently linked to the 5'-end of the positive-strand, negative-strand genomic RNAs and subgenomic RNA. Acts as a genome-linked replication primer. May recruit ribosome to viral RNA thereby promoting viral proteins translation. Interacts with host translation initiation complex to allow the translation of viral proteins. In terms of biological role, protease-polymerase p76 processes the polyprotein: Pro-Pol is first released by autocleavage, then all other proteins are cleaved. Cleaves host translation initiation factor eIF4G1, eIF4G2 and PABP1 thereby inducing a shutdown of host protein synthesis. This shutdown may not prevent viral mRNA from being translated since viral Vpg replaces the cap. It is also an RNA-directed RNA polymerase which replicates genomic and antigenomic viral RNA by recognizing specific signals. Also transcribes a subgenomic mRNA by initiating RNA synthesis internally on antigenomic RNA. This sgRNA codes for structural proteins. Catalyzes the covalent attachment VPg with viral RNAs. Capsid protein self assembles to form an icosahedral capsid with a T=3 symmetry, about 38 nm in diameter, and consisting of 180 capsid proteins. The capsid encapsulate the genomic RNA and VP2 proteins. Attaches virion to target cells, inducing endocytosis of the viral particle. Acidification of the endosome induces conformational change of capsid protein thereby injecting virus genomic RNA into host cytoplasm. The sequence is that of Genome polyprotein from Homo sapiens (Human).